The sequence spans 391 residues: Glycosyltransferase afumC (391 aa).

Belongs to the afumC glycosyltransferase family.

The protein operates within secondary metabolite biosynthesis. With respect to regulation, activity is significantly decreased by addition of divalent cations such as Mg(2+), Mn(2+), Zn(2+), Ca(2+), Co(2+), Cu(2+), and Ni(2+); while Fe(2+) has little effect. Glycosyltransferase; part of the gene cluster that mediates the biosynthesis fumihopaside A, a hopane-type glucoside that enhances the thermotolerance and UV resistance of N.fumigata. The first step of fumihopaside A biosynthesis is performed by the squalene hopane cyclase afumA that catalyzes the cyclization of 3S-oxidosqualene into the hopene 21-beta-H-hopane-3-beta,22-diol. The cytochrome P450 monooxygenase afumB is responsible for both hydroxylation at C-24 and oxidations at C-30 of the afumA product. The glycosyltransferase afumC then catalyzes the glycosylation at C-24, using UDP-D-glucose as a donor, to produce fumihopaside A. AfumC is also able to accept UDP-D-galactose and UDP-D-glucuronic acid as donors to yield minor derivatives. Fumihopaside B, another minor derivative produced, is different from fumihopaside A due to the presence of a double bond between C-22 and C-29. The polypeptide is Glycosyltransferase afumC (Aspergillus fumigatus (strain CBS 144.89 / FGSC A1163 / CEA10) (Neosartorya fumigata)).